The chain runs to 82 residues: Small ribosomal subunit protein uS17 (82 aa).

This sequence belongs to the universal ribosomal protein uS17 family. As to quaternary structure, part of the 30S ribosomal subunit.

In terms of biological role, one of the primary rRNA binding proteins, it binds specifically to the 5'-end of 16S ribosomal RNA. This Shewanella piezotolerans (strain WP3 / JCM 13877) protein is Small ribosomal subunit protein uS17.